Here is a 125-residue protein sequence, read N- to C-terminus: Large ribosomal subunit protein bL12 (125 aa).

Belongs to the bacterial ribosomal protein bL12 family. As to quaternary structure, homodimer. Part of the ribosomal stalk of the 50S ribosomal subunit. Forms a multimeric L10(L12)X complex, where L10 forms an elongated spine to which 2 to 4 L12 dimers bind in a sequential fashion. Binds GTP-bound translation factors.

Its function is as follows. Forms part of the ribosomal stalk which helps the ribosome interact with GTP-bound translation factors. Is thus essential for accurate translation. The polypeptide is Large ribosomal subunit protein bL12 (Helicobacter pylori (strain HPAG1)).